The following is an 886-amino-acid chain: MAANGGGGGAGGCSNGGGGGAVNGAAANGGGGGGGGSKGATTRRAKVSPMDRYWVPTDEKEMAAAVADGGEDGRRPLLFRTFTVRGILLHPYRLLTLVRLVAIVLFFIWRIRHPYADGMFFWWISVIGDFWFGVSWLLNQVAKLKPIRRVPDLNLLQQQFDLPDGNSNLPGLDVFINTVDPINEPMIYTMNAILSILAADYPVDKHACYLSDDGGSIIHYDGLLETAKFAALWVPFCRKHSIEPRAPESYFAVKSRPYAGSAPEDFLSDHRYMRREYDEFKVRLDALFTVIPKRSDAYNQAHAEEGVKATWMADGTEWPGTWIDPSENHKKGNHAGIVQVMLNHPSNQPQLGLPASTDSPVDFSNVDVRLPMLVYIAREKRPGYDHQKKAGAMNVQLRVSALLTNAPFIINFDGDHYVNNSKAFRAGICFMLDRREGDNTAFVQFPQRFDDVDPTDRYCNHNRVFFDATLLGLNGIQGPSYVGTGCMFRRVALYGVDPPRWRPDDGNIVDSSKKFGNLDSFISSIPIAANQERSIISPPALEESILQELSDAMACAYEDGTDWGKDVGWVYNIATEDVVTGFRLHRTGWRSMYCRMEPDAFRGTAPINLTERLYQILRWSGGSLEMFFSHNCPLLAGRRLNFMQRIAYINMTGYPVTSVFLLFYLLFPVIWIFRGIFYIQKPFPTYVLYLVIVIFMSEMIGMVEIKWAGLTLLDWIRNEQFYIIGATAVYPLAVLHIVLKCFGLKGVSFKLTAKQVASSTSEKFAELYDVQWAPLLFPTIVVIAVNICAIGAAIGKALFGGWSLMQMGDASLGLVFNVWILLLIYPFALGIMGRWSKRPYILFVLIVISFVIIALADIAIQAMRSGSVRLHFRRSGGANFPTSWGF.

A run of 2 helical transmembrane segments spans residues 87–107 (ILLH…VLFF) and 118–138 (GMFF…SWLL). Asp213 is an active-site residue. 2 residues coordinate substrate: Asp413 and Asp415. Asp577 is an active-site residue. Transmembrane regions (helical) follow at residues 659 to 679 (VFLL…IFYI), 683 to 703 (FPTY…IGMV), 723 to 743 (IIGA…KCFG), 775 to 795 (LLFP…AAIG), 812 to 832 (LGLV…LGIM), and 840 to 860 (YILF…DIAI).

The protein belongs to the glycosyltransferase 2 family. Plant cellulose synthase-like F subfamily.

It localises to the golgi apparatus membrane. Functionally, may catalyze both beta-1,3 and beta-1,4 glycosidic linkage on beta-D-glucan. Essential for (1,3;1,4)-beta-D-glucans synthesis in grasses and cereals (Poaceae). The mixed-linked glucans (which are not present in walls of dicotyledons or most other monocotyledonous plants) are particularly important constituents of the walls of the starchy endosperm and aleurone cells of cereal grains such as oats, wheat, rice and barley. They can account for up to 70% by weight of the wall. The sequence is that of Probable mixed-linked glucan synthase 8 (CSFL8) from Oryza sativa subsp. japonica (Rice).